A 549-amino-acid polypeptide reads, in one-letter code: Coiled-coil domain-containing protein 102A (549 aa).

3 disordered regions span residues 1–61 (MSHG…TAPA), 135–195 (LAGA…GSQE), and 207–248 (PEEP…EEDA). Residues serine 12, serine 26, and serine 28 each carry the phosphoserine modification. Positions 37–55 (SLPPTPPSGTPSPGPPPSL) are enriched in pro residues. Residues 69–160 (ESREELRLRE…ARGRELARLR (92 aa)) are a coiled coil. 2 stretches are compositionally biased toward basic and acidic residues: residues 135–158 (LAGA…ELAR) and 165–187 (AADK…DIGA). Coiled-coil stretches lie at residues 263-398 (KVLL…NASA) and 426-517 (KLKK…NAPL). Disordered stretches follow at residues 472–496 (ELDE…QSEN) and 509–549 (RRQQ…IQVA). Residues 530 to 549 (EAGDGASDLDEDEDLQIQVA) show a composition bias toward acidic residues. Serine 536 is subject to Phosphoserine.

In Mus musculus (Mouse), this protein is Coiled-coil domain-containing protein 102A (Ccdc102a).